Here is a 175-residue protein sequence, read N- to C-terminus: Sec-independent protein translocase protein TatB (175 aa).

A helical membrane pass occupies residues 1-21 (MFDIGWSELVLIGVVALIAIG). 2 disordered regions span residues 100 to 132 (KPAE…PTPE) and 155 to 175 (QAPV…AKAS). The segment covering 111–132 (EAPATSSEALTTPTTPEAPTPE) has biased composition (low complexity).

It belongs to the TatB family. As to quaternary structure, the Tat system comprises two distinct complexes: a TatABC complex, containing multiple copies of TatA, TatB and TatC subunits, and a separate TatA complex, containing only TatA subunits. Substrates initially bind to the TatABC complex, which probably triggers association of the separate TatA complex to form the active translocon.

The protein localises to the cell inner membrane. In terms of biological role, part of the twin-arginine translocation (Tat) system that transports large folded proteins containing a characteristic twin-arginine motif in their signal peptide across membranes. Together with TatC, TatB is part of a receptor directly interacting with Tat signal peptides. TatB may form an oligomeric binding site that transiently accommodates folded Tat precursor proteins before their translocation. In Bradyrhizobium diazoefficiens (strain JCM 10833 / BCRC 13528 / IAM 13628 / NBRC 14792 / USDA 110), this protein is Sec-independent protein translocase protein TatB.